Here is a 490-residue protein sequence, read N- to C-terminus: Glutathione reductase (490 aa).

Ser-19 and Gly-20 together coordinate FAD. Glutathione is bound at residue Ser-19. Arg-26 contacts glutathione. Glu-39, Thr-48, Cys-49, and Lys-57 together coordinate FAD. A disulfide bridge links Cys-49 with Cys-54. Position 110 (Tyr-110) interacts with glutathione. Ala-126 contributes to the FAD binding site. NADP(+)-binding residues include Ala-208, Ile-211, Glu-214, Arg-231, and Arg-237. Ser-246 is a glutathione binding site. An NADP(+)-binding site is contributed by Gly-297. Residue Asp-337 coordinates FAD. Glu-343 provides a ligand contact to NADP(+). Thr-345 contacts FAD. Arg-353 contacts glutathione. Val-379 lines the NADP(+) pocket. Lys-432 provides a ligand contact to glutathione. Residue His-479 coordinates FAD. Residue His-479 is the Proton acceptor of the active site.

The protein belongs to the class-I pyridine nucleotide-disulfide oxidoreductase family. As to quaternary structure, homodimer. FAD serves as cofactor.

The protein resides in the cytoplasm. Its subcellular location is the mitochondrion. It carries out the reaction 2 glutathione + NADP(+) = glutathione disulfide + NADPH + H(+). In terms of biological role, catalyzes the reduction of glutathione disulfide (GSSG) to reduced glutathione (GSH). Constitutes the major mechanism to maintain a high GSH:GSSG ratio in the cytosol. This chain is Glutathione reductase (GLR1), found in Debaryomyces hansenii (strain ATCC 36239 / CBS 767 / BCRC 21394 / JCM 1990 / NBRC 0083 / IGC 2968) (Yeast).